We begin with the raw amino-acid sequence, 287 residues long: Nucleotide-binding protein HD_0584 (287 aa).

8 to 15 contacts ATP; that stretch reads GRSGSGKS. Position 56–59 (56–59) interacts with GTP; that stretch reads DIRN.

This sequence belongs to the RapZ-like family.

Displays ATPase and GTPase activities. This chain is Nucleotide-binding protein HD_0584, found in Haemophilus ducreyi (strain 35000HP / ATCC 700724).